The following is a 386-amino-acid chain: MPDPYAWLQNSLLTIHRADWYRSVQAIQGRAGASVVLGGQEVINFASNDYLGLAGDERLIAAAVAATQEFGTGSTGSRLLSGHRELHGQLEKAIASWKQTEDALVFSSGYLANIGAIAALVGKRDLILSDQYNHSSLKNGAILSGATVREYSHCQVGELKTQLLEQRQNYRRCLILTDSVFSMDGDLCPLPDLLDLAEEFSCMLLVDEAHATGVMGETGAGCVEHFGCTGRQLIQIGTLSKALGSLGGYVTGSHNLIDYLRNRAPSWIYTTGLSPADTAAALAAINIAQQEPQHRMQLWHNVNYLRELLQKIPNLKLLPSASPILCFQLSSPSEALQVGKQLKQAGIFAPAIRPPTVPTSRIRISLMATHKASHIEKLVAVLQGLN.

Arginine 22 lines the substrate pocket. Glycine 109–tyrosine 110 lines the pyridoxal 5'-phosphate pocket. Histidine 134 is a substrate binding site. Pyridoxal 5'-phosphate contacts are provided by residues serine 182, aspartate 207 to histidine 210, and threonine 238 to lysine 241. Position 241 is an N6-(pyridoxal phosphate)lysine (lysine 241). Position 356 (threonine 356) interacts with substrate.

The protein belongs to the class-II pyridoxal-phosphate-dependent aminotransferase family. BioF subfamily. Homodimer. It depends on pyridoxal 5'-phosphate as a cofactor.

The catalysed reaction is 6-carboxyhexanoyl-[ACP] + L-alanine + H(+) = (8S)-8-amino-7-oxononanoate + holo-[ACP] + CO2. It participates in cofactor biosynthesis; biotin biosynthesis. Its function is as follows. Catalyzes the decarboxylative condensation of pimeloyl-[acyl-carrier protein] and L-alanine to produce 8-amino-7-oxononanoate (AON), [acyl-carrier protein], and carbon dioxide. The sequence is that of Putative 8-amino-7-oxononanoate synthase (bioF) from Nostoc sp. (strain PCC 7120 / SAG 25.82 / UTEX 2576).